An 82-amino-acid chain; its full sequence is Small ribosomal subunit protein bS20 (82 aa).

Basic residues predominate over residues 1–11 (MANHKSALKRI). The tract at residues 1–20 (MANHKSALKRIRSNETKRLR) is disordered.

It belongs to the bacterial ribosomal protein bS20 family.

Its function is as follows. Binds directly to 16S ribosomal RNA. This Christiangramia forsetii (strain DSM 17595 / CGMCC 1.15422 / KT0803) (Gramella forsetii) protein is Small ribosomal subunit protein bS20.